Reading from the N-terminus, the 245-residue chain is Putative [LysW]-aminoadipate/[LysW]-glutamate kinase (245 aa).

The substrate site is built by arginine 60 and asparagine 162.

This sequence belongs to the acetylglutamate kinase family. LysZ subfamily.

It localises to the cytoplasm. The catalysed reaction is [amino-group carrier protein]-C-terminal-N-(1,4-dicarboxybutan-1-yl)-L-glutamine + ATP = [amino-group carrier protein]-C-terminal-N-(1-carboxy-5-phosphooxy-5-oxopentan-1-yl)-L-glutamine + ADP. The enzyme catalyses [amino-group carrier protein]-C-terminal-gamma-(L-glutamyl)-L-glutamate + ATP = [amino-group carrier protein]-C-terminal-gamma-(5-phospho-L-glutamyl)-L-glutamate + ADP. It functions in the pathway amino-acid biosynthesis; L-lysine biosynthesis via AAA pathway; L-lysine from L-alpha-aminoadipate (Thermus route): step 2/5. Its pathway is amino-acid biosynthesis; L-arginine biosynthesis. Involved in both the arginine and lysine biosynthetic pathways. Phosphorylates the LysW-bound precursors glutamate (for arginine biosynthesis), respectively alpha-aminoadipate (for lysine biosynthesis). This is Putative [LysW]-aminoadipate/[LysW]-glutamate kinase from Pyrococcus abyssi (strain GE5 / Orsay).